Consider the following 455-residue polypeptide: Phosphoglucosamine mutase (455 aa).

S103 (phosphoserine intermediate) is an active-site residue. 4 residues coordinate Mg(2+): S103, D243, D245, and D247. S103 bears the Phosphoserine mark.

The protein belongs to the phosphohexose mutase family. Mg(2+) is required as a cofactor. Activated by phosphorylation.

It carries out the reaction alpha-D-glucosamine 1-phosphate = D-glucosamine 6-phosphate. Functionally, catalyzes the conversion of glucosamine-6-phosphate to glucosamine-1-phosphate. The sequence is that of Phosphoglucosamine mutase from Halorhodospira halophila (strain DSM 244 / SL1) (Ectothiorhodospira halophila (strain DSM 244 / SL1)).